Reading from the N-terminus, the 707-residue chain is Leukotoxin export ATP-binding protein LtxB (707 aa).

Residues 4–125 (QKNTNLALQA…ERYQSKVILI (122 aa)) enclose the Peptidase C39 domain. Residue His83 is part of the active site. 5 helical membrane passes run 158 to 178 (LIVS…FQVV), 191 to 211 (LNVI…LGGL), 269 to 289 (ALTS…MWYY), 295 to 315 (LVVL…SPIL), and 387 to 407 (AVMV…DLSI). One can recognise an ABC transmembrane type-1 domain in the interval 158 to 436 (LIVSIFLQIF…LAQIWQDFQQ (279 aa)). The region spanning 468–703 (ISFRNIKFRY…EKGLYSYLHQ (236 aa)) is the ABC transporter domain. Position 502 to 509 (502 to 509 (GRSGSGKS)) interacts with ATP.

Belongs to the ABC transporter superfamily. Protein-1 exporter (TC 3.A.1.109) family. In terms of assembly, probably part of a complex composed of LtxB, LtxD and TdeA, which forms a single transport channel across the two membranes.

The protein resides in the cell inner membrane. It carries out the reaction ATP + H2O + proteinSide 1 = ADP + phosphate + proteinSide 2.. Functionally, involved in the export of the LtxA leukotoxin. In Aggregatibacter actinomycetemcomitans (Actinobacillus actinomycetemcomitans), this protein is Leukotoxin export ATP-binding protein LtxB.